A 338-amino-acid chain; its full sequence is Ketol-acid reductoisomerase (NADP(+)) (338 aa).

One can recognise a KARI N-terminal Rossmann domain in the interval 1–181 (MKVYYDKDAD…GGTRGGVIET (181 aa)). Residues 24 to 27 (YGSQ), R47, and S52 contribute to the NADP(+) site. H107 is an active-site residue. Position 133 (G133) interacts with NADP(+). One can recognise a KARI C-terminal knotted domain in the interval 182-327 (TFKEETETDL…AKLRDMMPWI (146 aa)). Mg(2+)-binding residues include D190, E194, E226, and E230. S251 contacts substrate.

This sequence belongs to the ketol-acid reductoisomerase family. The cofactor is Mg(2+).

It catalyses the reaction (2R)-2,3-dihydroxy-3-methylbutanoate + NADP(+) = (2S)-2-acetolactate + NADPH + H(+). It carries out the reaction (2R,3R)-2,3-dihydroxy-3-methylpentanoate + NADP(+) = (S)-2-ethyl-2-hydroxy-3-oxobutanoate + NADPH + H(+). It functions in the pathway amino-acid biosynthesis; L-isoleucine biosynthesis; L-isoleucine from 2-oxobutanoate: step 2/4. Its pathway is amino-acid biosynthesis; L-valine biosynthesis; L-valine from pyruvate: step 2/4. Functionally, involved in the biosynthesis of branched-chain amino acids (BCAA). Catalyzes an alkyl-migration followed by a ketol-acid reduction of (S)-2-acetolactate (S2AL) to yield (R)-2,3-dihydroxy-isovalerate. In the isomerase reaction, S2AL is rearranged via a Mg-dependent methyl migration to produce 3-hydroxy-3-methyl-2-ketobutyrate (HMKB). In the reductase reaction, this 2-ketoacid undergoes a metal-dependent reduction by NADPH to yield (R)-2,3-dihydroxy-isovalerate. The chain is Ketol-acid reductoisomerase (NADP(+)) from Nitrosomonas europaea (strain ATCC 19718 / CIP 103999 / KCTC 2705 / NBRC 14298).